The sequence spans 399 residues: S-adenosylmethionine synthase (399 aa).

Histidine 17 is a binding site for ATP. Aspartate 19 lines the Mg(2+) pocket. Position 45 (glutamate 45) interacts with K(+). Positions 58 and 101 each coordinate L-methionine. The segment at 101-111 (QSADIAMGVDQ) is flexible loop. ATP contacts are provided by residues 177–179 (DGK), 244–245 (RF), aspartate 253, 259–260 (RK), alanine 276, and lysine 280. Aspartate 253 serves as a coordination point for L-methionine. An L-methionine-binding site is contributed by lysine 284.

This sequence belongs to the AdoMet synthase family. As to quaternary structure, homotetramer; dimer of dimers. Mg(2+) serves as cofactor. K(+) is required as a cofactor.

The protein resides in the cytoplasm. The enzyme catalyses L-methionine + ATP + H2O = S-adenosyl-L-methionine + phosphate + diphosphate. Its pathway is amino-acid biosynthesis; S-adenosyl-L-methionine biosynthesis; S-adenosyl-L-methionine from L-methionine: step 1/1. In terms of biological role, catalyzes the formation of S-adenosylmethionine (AdoMet) from methionine and ATP. The overall synthetic reaction is composed of two sequential steps, AdoMet formation and the subsequent tripolyphosphate hydrolysis which occurs prior to release of AdoMet from the enzyme. The sequence is that of S-adenosylmethionine synthase from Bacillus anthracis (strain A0248).